Reading from the N-terminus, the 721-residue chain is Polyribonucleotide nucleotidyltransferase (721 aa).

2 residues coordinate Mg(2+): D495 and D501. The 60-residue stretch at 562-621 (PRITTIKIRPERIKDIIGPGGKTIKDITARTGTSINIEDDGSVSIASPNQDKVEEAIKMI) folds into the KH domain. Residues 631-699 (GRIYLGTVRK…RSGKIRLSRK (69 aa)) form the S1 motif domain. A disordered region spans residues 699–721 (KEALADSAKKSEGTEPPKGEPAK).

Belongs to the polyribonucleotide nucleotidyltransferase family. It depends on Mg(2+) as a cofactor.

The protein resides in the cytoplasm. The catalysed reaction is RNA(n+1) + phosphate = RNA(n) + a ribonucleoside 5'-diphosphate. Functionally, involved in mRNA degradation. Catalyzes the phosphorolysis of single-stranded polyribonucleotides processively in the 3'- to 5'-direction. This Anaeromyxobacter sp. (strain K) protein is Polyribonucleotide nucleotidyltransferase.